Reading from the N-terminus, the 223-residue chain is Small ribosomal subunit protein uS3 (223 aa).

In terms of domain architecture, KH type-2 spans isoleucine 39–lysine 108.

Belongs to the universal ribosomal protein uS3 family. Part of the 30S ribosomal subunit. Forms a tight complex with proteins S10 and S14.

In terms of biological role, binds the lower part of the 30S subunit head. Binds mRNA in the 70S ribosome, positioning it for translation. The sequence is that of Small ribosomal subunit protein uS3 from Clostridium kluyveri (strain NBRC 12016).